A 444-amino-acid polypeptide reads, in one-letter code: Adenylosuccinate lyase (444 aa).

N(6)-(1,2-dicarboxyethyl)-AMP contacts are provided by residues 9-10, 73-75, and 97-98; these read RY, KHD, and TS. The Proton donor/acceptor role is filled by histidine 145. Glutamine 219 is a N(6)-(1,2-dicarboxyethyl)-AMP binding site. Serine 269 serves as the catalytic Proton donor/acceptor. Residues serine 270, 275–277, asparagine 283, and 314–318 contribute to the N(6)-(1,2-dicarboxyethyl)-AMP site; these read KRN and SAERI.

This sequence belongs to the lyase 1 family. Adenylosuccinate lyase subfamily. In terms of assembly, homotetramer. Residues from neighboring subunits contribute catalytic and substrate-binding residues to each active site.

The enzyme catalyses N(6)-(1,2-dicarboxyethyl)-AMP = fumarate + AMP. It carries out the reaction (2S)-2-[5-amino-1-(5-phospho-beta-D-ribosyl)imidazole-4-carboxamido]succinate = 5-amino-1-(5-phospho-beta-D-ribosyl)imidazole-4-carboxamide + fumarate. Its pathway is purine metabolism; AMP biosynthesis via de novo pathway; AMP from IMP: step 2/2. The protein operates within purine metabolism; IMP biosynthesis via de novo pathway; 5-amino-1-(5-phospho-D-ribosyl)imidazole-4-carboxamide from 5-amino-1-(5-phospho-D-ribosyl)imidazole-4-carboxylate: step 2/2. Catalyzes two reactions in de novo purine nucleotide biosynthesis. Catalyzes the breakdown of 5-aminoimidazole- (N-succinylocarboxamide) ribotide (SAICAR or 2-[5-amino-1-(5-phospho-beta-D-ribosyl)imidazole-4-carboxamido]succinate) to 5-aminoimidazole-4-carboxamide ribotide (AICAR or 5-amino-1-(5-phospho-beta-D-ribosyl)imidazole-4-carboxamide) and fumarate, and of adenylosuccinate (ADS or N(6)-(1,2-dicarboxyethyl)-AMP) to adenosine monophosphate (AMP) and fumarate. In Archaeoglobus fulgidus (strain ATCC 49558 / DSM 4304 / JCM 9628 / NBRC 100126 / VC-16), this protein is Adenylosuccinate lyase (purB).